The following is a 101-amino-acid chain: Acylphosphatase (101 aa).

The Acylphosphatase-like domain occupies 12-98; sequence RVHVFVTGRV…EGLRGFEVKR (87 aa). Catalysis depends on residues Arg-27 and Asn-45.

The protein belongs to the acylphosphatase family.

It catalyses the reaction an acyl phosphate + H2O = a carboxylate + phosphate + H(+). This Trichormus variabilis (strain ATCC 29413 / PCC 7937) (Anabaena variabilis) protein is Acylphosphatase (acyP).